Here is a 226-residue protein sequence, read N- to C-terminus: AA9 family lytic polysaccharide monooxygenase E (226 aa).

An N-terminal signal peptide occupies residues 1–18 (MLANGAIVFLAAALGVSG). Histidine 19 is a binding site for Cu(2+). Intrachain disulfides connect cysteine 56–cysteine 174 and cysteine 144–cysteine 226. Asparagine 69 carries an N-linked (GlcNAc...) asparagine glycan. Position 86 (histidine 86) interacts with Cu(2+). The O2 site is built by histidine 160 and glutamine 169. Tyrosine 171 is a binding site for Cu(2+).

It belongs to the polysaccharide monooxygenase AA9 family. Cu(2+) is required as a cofactor.

It localises to the secreted. The catalysed reaction is [(1-&gt;4)-beta-D-glucosyl]n+m + reduced acceptor + O2 = 4-dehydro-beta-D-glucosyl-[(1-&gt;4)-beta-D-glucosyl]n-1 + [(1-&gt;4)-beta-D-glucosyl]m + acceptor + H2O.. Lytic polysaccharide monooxygenase (LPMO) that depolymerizes crystalline and amorphous polysaccharides via the oxidation of scissile alpha- or beta-(1-4)-glycosidic bonds, yielding C1 and C4 oxidation products. Catalysis by LPMOs requires the reduction of the active-site copper from Cu(II) to Cu(I) by a reducing agent and H(2)O(2) or O(2) as a cosubstrate. Shows endoglucanase activity on tamarind xyloglucan, as well as on beechwood xylan when combined with phosphoric acid swollen cellulose (PASC). Shows no activity on wheat arabinoxylan, konjac glucomannan, acetylated spruce galactoglucomannan, or cellopentaose. In Thermothielavioides terrestris (strain ATCC 38088 / NRRL 8126) (Thielavia terrestris), this protein is AA9 family lytic polysaccharide monooxygenase E.